The sequence spans 271 residues: Cobalt import ATP-binding protein CbiO (271 aa).

Positions Leu2 to Thr236 constitute an ABC transporter domain. Gly34–Ser41 is an ATP binding site.

The protein belongs to the ABC transporter superfamily. Cobalt importer (TC 3.A.1.18.1) family. As to quaternary structure, forms an energy-coupling factor (ECF) transporter complex composed of an ATP-binding protein (A component, CbiO), a transmembrane protein (T component, CbiQ) and 2 possible substrate-capture proteins (S components, CbiM and CbiN) of unknown stoichimetry.

It is found in the cell inner membrane. The protein operates within cofactor biosynthesis; adenosylcobalamin biosynthesis. Part of the energy-coupling factor (ECF) transporter complex CbiMNOQ involved in cobalt import. Presumably responsible for energy coupling to the transport system. The sequence is that of Cobalt import ATP-binding protein CbiO from Salmonella paratyphi A (strain ATCC 9150 / SARB42).